Consider the following 60-residue polypeptide: MADVKITQVRSTIGARWKQRESLKTLGLRKIRQTVVREDNAQTRGLLQVVRHLVTVEDVK.

It belongs to the universal ribosomal protein uL30 family. As to quaternary structure, part of the 50S ribosomal subunit.

This is Large ribosomal subunit protein uL30 from Mycobacteroides abscessus (strain ATCC 19977 / DSM 44196 / CCUG 20993 / CIP 104536 / JCM 13569 / NCTC 13031 / TMC 1543 / L948) (Mycobacterium abscessus).